The primary structure comprises 305 residues: UDP-3-O-acyl-N-acetylglucosamine deacetylase (305 aa).

The Zn(2+) site is built by His79, His238, and Asp242. Catalysis depends on His265, which acts as the Proton donor.

It belongs to the LpxC family. It depends on Zn(2+) as a cofactor.

It carries out the reaction a UDP-3-O-[(3R)-3-hydroxyacyl]-N-acetyl-alpha-D-glucosamine + H2O = a UDP-3-O-[(3R)-3-hydroxyacyl]-alpha-D-glucosamine + acetate. Its pathway is glycolipid biosynthesis; lipid IV(A) biosynthesis; lipid IV(A) from (3R)-3-hydroxytetradecanoyl-[acyl-carrier-protein] and UDP-N-acetyl-alpha-D-glucosamine: step 2/6. Its function is as follows. Catalyzes the hydrolysis of UDP-3-O-myristoyl-N-acetylglucosamine to form UDP-3-O-myristoylglucosamine and acetate, the committed step in lipid A biosynthesis. This Cronobacter sakazakii (strain ATCC BAA-894) (Enterobacter sakazakii) protein is UDP-3-O-acyl-N-acetylglucosamine deacetylase.